Here is a 438-residue protein sequence, read N- to C-terminus: DNA primase DnaG (438 aa).

Residues 171–245 (DAILVVEGRA…DIDYVARAPE (75 aa)) enclose the Toprim domain. The Mg(2+) site is built by Glu177, Asp219, and Asp221.

It belongs to the archaeal DnaG primase family. As to quaternary structure, forms a ternary complex with MCM helicase and DNA. Component of the archaeal exosome complex. Mg(2+) serves as cofactor.

It catalyses the reaction ssDNA + n NTP = ssDNA/pppN(pN)n-1 hybrid + (n-1) diphosphate.. Functionally, RNA polymerase that catalyzes the synthesis of short RNA molecules used as primers for DNA polymerase during DNA replication. Also part of the exosome, which is a complex involved in RNA degradation. Acts as a poly(A)-binding protein that enhances the interaction between heteromeric, adenine-rich transcripts and the exosome. The polypeptide is DNA primase DnaG (Methanothrix thermoacetophila (strain DSM 6194 / JCM 14653 / NBRC 101360 / PT) (Methanosaeta thermophila)).